Consider the following 255-residue polypeptide: High-affinity branched-chain amino acid transport ATP-binding protein BraF (255 aa).

In terms of domain architecture, ABC transporter spans 6–254 (LEVSGLTMRF…PDVIKAYLGE (249 aa)). 38–45 (GPNGAGKT) provides a ligand contact to ATP.

It belongs to the ABC transporter superfamily.

Its subcellular location is the cell inner membrane. Component of the high affinity leucine, isoleucine, valine, transport system (LIV-I), which is operative without Na(+) and is specific for alanine and threonine, in addition to branched-chain amino acids. This is High-affinity branched-chain amino acid transport ATP-binding protein BraF (braF) from Pseudomonas aeruginosa (strain ATCC 15692 / DSM 22644 / CIP 104116 / JCM 14847 / LMG 12228 / 1C / PRS 101 / PAO1).